The sequence spans 298 residues: Ketohexokinase (298 aa).

Asp15, Gly41, Asn42, and Asn45 together coordinate beta-D-fructose. ATP contacts are provided by residues Arg108, 226 to 229 (AEEG), and 255 to 258 (GAGD). Asp258 contacts beta-D-fructose.

It belongs to the carbohydrate kinase PfkB family. As to quaternary structure, homodimer.

The enzyme catalyses beta-D-fructose + ATP = beta-D-fructose 1-phosphate + ADP + H(+). The protein operates within carbohydrate metabolism; fructose metabolism. Requires potassium. Inhibition by ADP. Functionally, catalyzes the phosphorylation of the ketose sugar fructose to fructose-1-phosphate. This is Ketohexokinase from Mus musculus (Mouse).